The chain runs to 214 residues: Cytochrome b (214 aa).

4 helical membrane passes run Phe31–Ile51, Trp75–Ile96, Trp111–Leu131, and Phe176–Leu196. Residues His81 and His95 each coordinate heme b. Residues His180 and His194 each coordinate heme b. His199 is an a ubiquinone binding site.

It belongs to the cytochrome b family. In terms of assembly, the cytochrome bc1 complex contains 3 respiratory subunits (MT-CYB, CYC1 and UQCRFS1), 2 core proteins (UQCRC1 and UQCRC2) and probably 6 low-molecular weight proteins. Heme b is required as a cofactor.

It is found in the mitochondrion inner membrane. Functionally, component of the ubiquinol-cytochrome c reductase complex (complex III or cytochrome b-c1 complex) that is part of the mitochondrial respiratory chain. The b-c1 complex mediates electron transfer from ubiquinol to cytochrome c. Contributes to the generation of a proton gradient across the mitochondrial membrane that is then used for ATP synthesis. The chain is Cytochrome b (MT-CYB) from Crotalus atrox (Western diamondback rattlesnake).